The sequence spans 509 residues: Probable cytochrome P450 4ac3 (509 aa).

Residue C454 coordinates heme.

The protein belongs to the cytochrome P450 family. Requires heme as cofactor.

It localises to the endoplasmic reticulum membrane. The protein resides in the microsome membrane. Its function is as follows. May be involved in the metabolism of insect hormones and in the breakdown of synthetic insecticides. In Drosophila melanogaster (Fruit fly), this protein is Probable cytochrome P450 4ac3 (Cyp4ac3).